We begin with the raw amino-acid sequence, 325 residues long: Tetraacyldisaccharide 4'-kinase (325 aa).

55–62 (TAGGNGKT) is a binding site for ATP.

It belongs to the LpxK family.

The catalysed reaction is a lipid A disaccharide + ATP = a lipid IVA + ADP + H(+). Its pathway is glycolipid biosynthesis; lipid IV(A) biosynthesis; lipid IV(A) from (3R)-3-hydroxytetradecanoyl-[acyl-carrier-protein] and UDP-N-acetyl-alpha-D-glucosamine: step 6/6. Functionally, transfers the gamma-phosphate of ATP to the 4'-position of a tetraacyldisaccharide 1-phosphate intermediate (termed DS-1-P) to form tetraacyldisaccharide 1,4'-bis-phosphate (lipid IVA). This chain is Tetraacyldisaccharide 4'-kinase, found in Salmonella arizonae (strain ATCC BAA-731 / CDC346-86 / RSK2980).